A 403-amino-acid chain; its full sequence is F-box/LRR-repeat protein At1g06630 (403 aa).

Residues 11-59 (RDAINWLPDEILGKILSLLATKQAVSTSVLSKKWRTLFKLVDTLEFDDS) enclose the F-box domain. LRR repeat units lie at residues 239-262 (LPNL…NLES) and 288-312 (IRNV…KYGL).

The chain is F-box/LRR-repeat protein At1g06630 from Arabidopsis thaliana (Mouse-ear cress).